A 276-amino-acid chain; its full sequence is Large ribosomal subunit protein uL2 (276 aa).

Positions 222–276 (GVAMNPIDHPLGGGEGRSSGGRHPVSPWGMPTKGYKTRDRKKASSKLIIKRRGQK) are disordered. The span at 259-276 (RDRKKASSKLIIKRRGQK) shows a compositional bias: basic residues.

The protein belongs to the universal ribosomal protein uL2 family. Part of the 50S ribosomal subunit. Forms a bridge to the 30S subunit in the 70S ribosome.

Its function is as follows. One of the primary rRNA binding proteins. Required for association of the 30S and 50S subunits to form the 70S ribosome, for tRNA binding and peptide bond formation. It has been suggested to have peptidyltransferase activity; this is somewhat controversial. Makes several contacts with the 16S rRNA in the 70S ribosome. The polypeptide is Large ribosomal subunit protein uL2 (Nitratidesulfovibrio vulgaris (strain ATCC 29579 / DSM 644 / CCUG 34227 / NCIMB 8303 / VKM B-1760 / Hildenborough) (Desulfovibrio vulgaris)).